The sequence spans 776 residues: DExH-box ATP-dependent RNA helicase DExH18, mitochondrial (776 aa).

Residues 1–84 (MARGVAGVLR…RSFSSTVDNN (84 aa)) constitute a mitochondrion transit peptide. The disordered stretch occupies residues 80–101 (TVDNNGENDDIEESVGSESDDY). The span at 85 to 101 (GENDDIEESVGSESDDY) shows a compositional bias: acidic residues. The region spanning 268–426 (FARAMKRKIV…RFKPLVVEAK (159 aa)) is the Helicase ATP-binding domain. Position 281–288 (281–288 (GPTNSGKT)) interacts with ATP. The DEIH box; degenerate signature appears at 361-364 (DEIQ). Residues 427 to 595 (TLLGELKNVK…LFAAQVPDMA (169 aa)) enclose the Helicase C-terminal domain.

This sequence belongs to the DExH box helicase family. Homodimer; in free form. Component of the mitochondrial degradosome (mtEXO) complex which is a heteropentamer containing 2 copies of SUPV3L1 and 3 copies of PNPT1. It depends on Mg(2+) as a cofactor. Mn(2+) is required as a cofactor.

It localises to the nucleus. The protein resides in the mitochondrion matrix. Its subcellular location is the mitochondrion nucleoid. The catalysed reaction is ATP + H2O = ADP + phosphate + H(+). Major helicase player in mitochondrial RNA metabolism. Component of the mitochondrial degradosome (mtEXO) complex, that degrades 3' overhang double-stranded RNA with a 3'-to-5' directionality in an ATP-dependent manner. ATPase and ATP-dependent multisubstrate helicase, able to unwind double-stranded (ds) DNA and RNA, and RNA/DNA heteroduplexes in the 5'-to-3' direction. Plays a role in the RNA surveillance system in mitochondria; regulates the stability of mature mRNAs, the removal of aberrantly formed mRNAs and the rapid degradation of non coding processing intermediates. This Arabidopsis thaliana (Mouse-ear cress) protein is DExH-box ATP-dependent RNA helicase DExH18, mitochondrial.